The sequence spans 642 residues: Frizzled-1 (642 aa).

A signal peptide spans 1–68; it reads MAEEAAPSES…WLLEAPLLLG (68 aa). Disordered stretches follow at residues 26-45 and 76-99; these read PGRR…RPRA and QVSG…QYNG. Over 69–317 the chain is Extracellular; the sequence is VRAQAAGQVS…PEELRFSRTW (249 aa). Residues 106 to 225 enclose the FZ domain; the sequence is PDHGYCQPIS…HGAGELCVGQ (120 aa). Disulfide bonds link C111-C172, C119-C165, C156-C193, C182-C222, and C186-C210. N125 carries an N-linked (GlcNAc...) asparagine glycan. N-linked (GlcNAc...) asparagine glycosylation is present at N226. A helical membrane pass occupies residues 318-338; the sequence is IGIWSVLCCASTLFTVLTYLV. Topologically, residues 339-349 are cytoplasmic; the sequence is DMRRFSYPERP. The chain crosses the membrane as a helical span at residues 350–370; it reads IIFLSGCYTAVAVAYIAGFLL. Residues 371-397 are Extracellular-facing; it reads EDRVVCNDKFAEDGARTVAQGTKKEGC. A helical membrane pass occupies residues 398 to 418; the sequence is TILFMMLYFFSMASSIWWVIL. Residues 419–440 lie on the Cytoplasmic side of the membrane; that stretch reads SLTWFLAAGMKWGHEAIEANSQ. The chain crosses the membrane as a helical span at residues 441 to 461; it reads YFHLAAWAVPAIKTITILALG. Residues 462–484 lie on the Extracellular side of the membrane; the sequence is QVDGDVLSGVCFVGLNNVDALRG. A helical transmembrane segment spans residues 485-505; the sequence is FVLAPLFVYLFIGTSFLLAGF. Over 506-531 the chain is Cytoplasmic; that stretch reads VSLFRIRTIMKHDGTKTEKLEKLMVR. Residues 532 to 552 traverse the membrane as a helical segment; the sequence is IGVFSVLYTVPATIVIACYFY. The Extracellular segment spans residues 553–593; the sequence is EQAFRDQWERSWVAQSCKSYAIPCPHLQGGGGVPPHPPMSP. A helical transmembrane segment spans residues 594–614; that stretch reads DFTVFMIKYLMTLIVGITSGF. Residues 615 to 642 are Cytoplasmic-facing; sequence WIWSGKTLNSWRKFYTRLTNSKQGETTV. A Lys-Thr-X-X-X-Trp motif, mediates interaction with the PDZ domain of Dvl family members motif is present at residues 620 to 625; it reads KTLNSW. A PDZ-binding motif is present at residues 640–642; that stretch reads TTV.

It belongs to the G-protein coupled receptor Fz/Smo family. As to quaternary structure, interacts with MYOC. Interacts with WNT7B. Post-translationally, ubiquitinated by ZNRF3, leading to its degradation by the proteasome. Expressed in chondrocytes.

The protein resides in the cell membrane. Receptor for Wnt proteins. Activated by WNT7B. Activated by WNT3A, WNT3, WNT1 and to a lesser extent WNT2, but apparently not by WNT4, WNT5A, WNT5B, WNT6, WNT7A or WNT7B. Contradictory results showing activation by WNT7B have been described for mouse. Functions in the canonical Wnt/beta-catenin signaling pathway. The canonical Wnt/beta-catenin signaling pathway leads to the activation of disheveled proteins, inhibition of GSK-3 kinase, nuclear accumulation of beta-catenin and activation of Wnt target genes. A second signaling pathway involving PKC and calcium fluxes has been seen for some family members, but it is not yet clear if it represents a distinct pathway or if it can be integrated in the canonical pathway, as PKC seems to be required for Wnt-mediated inactivation of GSK-3 kinase. Both pathways seem to involve interactions with G-proteins. May be involved in transduction and intercellular transmission of polarity information during tissue morphogenesis and/or in differentiated tissues. In Mus musculus (Mouse), this protein is Frizzled-1 (Fzd1).